Here is a 418-residue protein sequence, read N- to C-terminus: Acetylornithine aminotransferase (418 aa).

Residues 116 to 117 (GA) and F149 each bind pyridoxal 5'-phosphate. R152 serves as a coordination point for N(2)-acetyl-L-ornithine. 240 to 243 (DEVQ) provides a ligand contact to pyridoxal 5'-phosphate. K269 is subject to N6-(pyridoxal phosphate)lysine. Residue S296 participates in N(2)-acetyl-L-ornithine binding. Residue T297 participates in pyridoxal 5'-phosphate binding.

This sequence belongs to the class-III pyridoxal-phosphate-dependent aminotransferase family. ArgD subfamily. In terms of assembly, homodimer. Requires pyridoxal 5'-phosphate as cofactor.

Its subcellular location is the cytoplasm. The enzyme catalyses N(2)-acetyl-L-ornithine + 2-oxoglutarate = N-acetyl-L-glutamate 5-semialdehyde + L-glutamate. It participates in amino-acid biosynthesis; L-arginine biosynthesis; N(2)-acetyl-L-ornithine from L-glutamate: step 4/4. The chain is Acetylornithine aminotransferase from Prochlorococcus marinus (strain MIT 9313).